The following is a 125-amino-acid chain: UPF0102 protein Mpop_0474 (125 aa).

This sequence belongs to the UPF0102 family.

The protein is UPF0102 protein Mpop_0474 of Methylorubrum populi (strain ATCC BAA-705 / NCIMB 13946 / BJ001) (Methylobacterium populi).